A 357-amino-acid polypeptide reads, in one-letter code: Protein MGF 360-14L (357 aa).

This sequence belongs to the asfivirus MGF 360 family. Interacts with host IRF3 and TRIM21; these interactions mediates degradation of IRF3 through TRIM21 and ubiquitin-meditated proteolysis.

The protein resides in the host cytoplasm. Plays a role in virus cell tropism, and may be required for efficient virus replication in macrophages. Also inhibits the host cGAS/STING-mediated type I interferon production by inducing host IRF3 degradation through the proteasome pathway. The protein is Protein MGF 360-14L of Ornithodoros (relapsing fever ticks).